A 1098-amino-acid polypeptide reads, in one-letter code: Platelet-derived growth factor receptor beta (1098 aa).

Positions 1–31 (MGLPGVIPALVLRGQLLLSVLWLLGPQTSRG) are cleaved as a signal peptide. The Extracellular segment spans residues 32-531 (LVITPPGPEF…VVPHSLPFKV (500 aa)). Ig-like C2-type domains follow at residues 33–119 (VITP…YIFV), 128–209 (PMDS…YSLQ), 213–308 (INVS…INIS), 330–402 (HRSR…HEDD), and 415–523 (PVRV…VTVV). Residues Asn44, Asn88, and Asn102 are each glycosylated (N-linked (GlcNAc...) asparagine). Cys53 and Cys99 are joined by a disulfide. Residues Cys148 and Cys189 are joined by a disulfide bond. A glycan (N-linked (GlcNAc...) asparagine) is linked at Asn214. Cys234 and Cys290 are joined by a disulfide. N-linked (GlcNAc...) asparagine glycans are attached at residues Asn291, Asn306, Asn353, Asn370, Asn444, Asn467, and Asn478. Cysteines 435 and 507 form a disulfide. The helical transmembrane segment at 532-552 (VVISAILALVVLTVISLIILI) threads the bilayer. The Cytoplasmic portion of the chain corresponds to 553-1098 (MLWQKKPRYE…PLAEAEDSFL (546 aa)). Tyr561, Tyr578, and Tyr580 each carry phosphotyrosine; by autocatalysis. Positions 599–961 (LVLGRTLGSG…QLVLLLERLL (363 aa)) constitute a Protein kinase domain. ATP contacts are provided by residues 605-613 (LGSGAFGQV) and Lys633. Tyr685 bears the Phosphotyrosine; by ABL1 and ABL2 mark. Residues Tyr715, Tyr739, Tyr750, Tyr762, Tyr770, Tyr774, and Tyr777 each carry the phosphotyrosine; by autocatalysis modification. The active-site Proton acceptor is the Asp825. Phosphotyrosine; by autocatalysis is present on Tyr856. 2 positions are modified to phosphotyrosine; by ABL1 and ABL2: Tyr933 and Tyr969. A phosphotyrosine; by autocatalysis mark is found at Tyr1008 and Tyr1020. A disordered region spans residues 1016-1098 (SDNDYIIPLP…PLAEAEDSFL (83 aa)). The span at 1042 to 1059 (SLASSTLNEVNTSSTISC) shows a compositional bias: polar residues. Over residues 1062 to 1082 (PLELQEEPQQAEPEAQLEQPQ) the composition is skewed to low complexity.

It belongs to the protein kinase superfamily. Tyr protein kinase family. CSF-1/PDGF receptor subfamily. Interacts with homodimeric PDGFB and PDGFD, and with heterodimers formed by PDGFA and PDGFB. May also interact with homodimeric PDGFC. Monomer in the absence of bound ligand. Interaction with homodimeric PDGFB, heterodimers formed by PDGFA and PDGFB or homodimeric PDGFD, leads to receptor dimerization, where both PDGFRA homodimers and heterodimers with PDGFRB are observed. Interacts with SH2B2/APS. Interacts directly (tyrosine phosphorylated) with SHB. Interacts (tyrosine phosphorylated) with PIK3R1 and RASA1. Interacts (tyrosine phosphorylated) with CBL. Interacts (tyrosine phosphorylated) with SRC and SRC family kinases. Interacts (tyrosine phosphorylated) with PIK3C2B, maybe indirectly. Interacts (tyrosine phosphorylated) with SHC1, GRB7, GRB10 and NCK1. Interaction with GRB2 is mediated by SHC1. Interacts (via C-terminus) with NHERF1. Post-translationally, autophosphorylated on tyrosine residues upon ligand binding. Autophosphorylation occurs in trans, i.e. one subunit of the dimeric receptor phosphorylates tyrosine residues on the other subunit. Phosphorylation at Tyr-578, and to a lesser degree, Tyr-580 is important for interaction with SRC. Phosphorylation at Tyr-715 is important for interaction with GRB2. Phosphorylation at Tyr-739 and Tyr-750 is important for interaction with PIK3R1. Phosphorylation at Tyr-750 is important for interaction with NCK1. Phosphorylation at Tyr-770 and Tyr-856 is important for interaction with RASA1/GAP. Phosphorylation at Tyr-856 is important for efficient phosphorylation of PLCG1 and PTPN11, resulting in increased phosphorylation of AKT1, MAPK1/ERK2 and/or MAPK3/ERK1, PDCD6IP/ALIX and STAM, and in increased cell proliferation. Phosphorylation at Tyr-1008 is important for interaction with PTPN11. Phosphorylation at Tyr-1008 and Tyr-1020 is important for interaction with PLCG1. Dephosphorylated by PTPRJ at Tyr-750, Tyr-856, Tyr-1008 and Tyr-1020. Dephosphorylated by PTPN2 at Tyr-578 and Tyr-1020. In terms of processing, N-glycosylated. Ubiquitinated. After autophosphorylation, the receptor is polyubiquitinated, leading to its degradation. In terms of tissue distribution, weakly expressed in glomerular mesangial cells and interstitial cells. Up-regulated in areas of renal fibrosis. In mice with unilateral ureteral obstruction, increased expression in interstitial cells at day 4 and expression is markedly elevated at day 7 and is maximal at day 14.

The protein resides in the cell membrane. The protein localises to the cytoplasmic vesicle. It localises to the lysosome lumen. The enzyme catalyses L-tyrosyl-[protein] + ATP = O-phospho-L-tyrosyl-[protein] + ADP + H(+). Present in an inactive conformation in the absence of bound ligand. Binding of PDGFB and/or PDGFD leads to dimerization and activation by autophosphorylation on tyrosine residues. Tyrosine-protein kinase that acts as a cell-surface receptor for homodimeric PDGFB and PDGFD and for heterodimers formed by PDGFA and PDGFB, and plays an essential role in the regulation of embryonic development, cell proliferation, survival, differentiation, chemotaxis and migration. Plays an essential role in blood vessel development by promoting proliferation, migration and recruitment of pericytes and smooth muscle cells to endothelial cells. Plays a role in the migration of vascular smooth muscle cells and the formation of neointima at vascular injury sites. Required for normal development of the cardiovascular system. Required for normal recruitment of pericytes (mesangial cells) in the kidney glomerulus, and for normal formation of a branched network of capillaries in kidney glomeruli. Promotes rearrangement of the actin cytoskeleton and the formation of membrane ruffles. Binding of its cognate ligands - homodimeric PDGFB, heterodimers formed by PDGFA and PDGFB or homodimeric PDGFD -leads to the activation of several signaling cascades; the response depends on the nature of the bound ligand and is modulated by the formation of heterodimers between PDGFRA and PDGFRB. Phosphorylates PLCG1, PIK3R1, PTPN11, RASA1/GAP, CBL, SHC1 and NCK1. Activation of PLCG1 leads to the production of the cellular signaling molecules diacylglycerol and inositol 1,4,5-trisphosphate, mobilization of cytosolic Ca(2+) and the activation of protein kinase C. Phosphorylation of PIK3R1, the regulatory subunit of phosphatidylinositol 3-kinase, leads to the activation of the AKT1 signaling pathway. Phosphorylation of SHC1, or of the C-terminus of PTPN11, creates a binding site for GRB2, resulting in the activation of HRAS, RAF1 and down-stream MAP kinases, including MAPK1/ERK2 and/or MAPK3/ERK1. Promotes phosphorylation and activation of SRC family kinases. Promotes phosphorylation of PDCD6IP/ALIX and STAM. Receptor signaling is down-regulated by protein phosphatases that dephosphorylate the receptor and its down-stream effectors, and by rapid internalization of the activated receptor. In Mus musculus (Mouse), this protein is Platelet-derived growth factor receptor beta (Pdgfrb).